The primary structure comprises 417 residues: RH-like protein IIF (417 aa).

11 helical membrane passes run 12-32, 44-64, 77-97, 125-145, 172-192, 203-223, 238-258, 265-285, 287-307, 331-351, and 358-378; these read CLPL…YFFT, LVAS…GFGF, VAFN…LDGF, ISAG…MVLV, FYLF…KPLP, TIPS…WPSF, VFNT…GSSL, ISMT…GTSC, LIPS…ISIG, NFSL…VRHT, and MIGF…AIAL.

The protein belongs to the ammonium transporter (TC 2.A.49) family. Rh subfamily.

It is found in the membrane. Its function is as follows. May be part of an oligomeric complex which is likely to have a transport or channel function in the erythrocyte membrane. In Pan troglodytes (Chimpanzee), this protein is RH-like protein IIF.